Here is a 110-residue protein sequence, read N- to C-terminus: uncharacterized protein (110 aa).

This is an uncharacterized protein from Autographa californica nuclear polyhedrosis virus (AcMNPV).